The following is a 331-amino-acid chain: Biotin synthase (331 aa).

Positions 39-264 (SELQTCYLVS…VFPQSMVRLA (226 aa)) constitute a Radical SAM core domain. [4Fe-4S] cluster contacts are provided by C54, C58, and C61. The [2Fe-2S] cluster site is built by C98, C130, C190, and R262.

This sequence belongs to the radical SAM superfamily. Biotin synthase family. In terms of assembly, homodimer. [4Fe-4S] cluster serves as cofactor. Requires [2Fe-2S] cluster as cofactor.

It carries out the reaction (4R,5S)-dethiobiotin + (sulfur carrier)-SH + 2 reduced [2Fe-2S]-[ferredoxin] + 2 S-adenosyl-L-methionine = (sulfur carrier)-H + biotin + 2 5'-deoxyadenosine + 2 L-methionine + 2 oxidized [2Fe-2S]-[ferredoxin]. The protein operates within cofactor biosynthesis; biotin biosynthesis; biotin from 7,8-diaminononanoate: step 2/2. In terms of biological role, catalyzes the conversion of dethiobiotin (DTB) to biotin by the insertion of a sulfur atom into dethiobiotin via a radical-based mechanism. The protein is Biotin synthase of Chlamydia abortus (strain DSM 27085 / S26/3) (Chlamydophila abortus).